The primary structure comprises 309 residues: Carbamate kinase (309 aa).

It belongs to the carbamate kinase family.

The protein localises to the cytoplasm. The enzyme catalyses hydrogencarbonate + NH4(+) + ATP = carbamoyl phosphate + ADP + H2O + H(+). It functions in the pathway metabolic intermediate metabolism; carbamoyl phosphate degradation; CO(2) and NH(3) from carbamoyl phosphate: step 1/1. This chain is Carbamate kinase (arcC), found in Staphylococcus haemolyticus (strain JCSC1435).